We begin with the raw amino-acid sequence, 92 residues long: uncharacterized protein (92 aa).

Positions 1 to 23 (MNPAIVVIIVLLVAALLIWACKA) are cleaved as a signal peptide.

This is an uncharacterized protein from Acheta domesticus (House cricket).